Reading from the N-terminus, the 371-residue chain is MSQVKRTPLYETHRALGAKMIPFGGWDMPVQYSGIIAEHNATREAAGLFDVSHMGEIFITGEPKIVLDFLELVTCNSVASLSDFQVQYNAILNENGGLVDDVTIYKFSVEKYMICSNASNYETVTAHLLKYLPASGVKVSDQSPNWHQIALQGPKANEIFSKFLGRELDSIKYYHFALLDYQGEEIIVSRTGYTGEDGFEIYSSIPFGLKLWSGLSELGKPQGLLPCGLGARDTLRIEAKYPLYGHELNNQWTPIESGIGWIVKEKKNPYFSSGKILSQKKNGTEFKIVAFALTEAGVPRENFRVLDFQGNEIGKTTSGTFSPSLKKGIGLASIRTEKIKDGEPIQIEIREQPKQAIITTKPFIPGSIRKN.

Belongs to the GcvT family. The glycine cleavage system is composed of four proteins: P, T, L and H.

It catalyses the reaction N(6)-[(R)-S(8)-aminomethyldihydrolipoyl]-L-lysyl-[protein] + (6S)-5,6,7,8-tetrahydrofolate = N(6)-[(R)-dihydrolipoyl]-L-lysyl-[protein] + (6R)-5,10-methylene-5,6,7,8-tetrahydrofolate + NH4(+). Its function is as follows. The glycine cleavage system catalyzes the degradation of glycine. The protein is Aminomethyltransferase of Leptospira borgpetersenii serovar Hardjo-bovis (strain JB197).